A 201-amino-acid chain; its full sequence is Urease accessory protein UreG (201 aa).

11-18 (GPVGSGKT) contributes to the GTP binding site.

The protein belongs to the SIMIBI class G3E GTPase family. UreG subfamily. As to quaternary structure, homodimer. UreD, UreF and UreG form a complex that acts as a GTP-hydrolysis-dependent molecular chaperone, activating the urease apoprotein by helping to assemble the nickel containing metallocenter of UreC. The UreE protein probably delivers the nickel.

It localises to the cytoplasm. Facilitates the functional incorporation of the urease nickel metallocenter. This process requires GTP hydrolysis, probably effectuated by UreG. The chain is Urease accessory protein UreG from Synechococcus sp. (strain CC9605).